A 187-amino-acid polypeptide reads, in one-letter code: Large ribosomal subunit protein bL32m (187 aa).

Residues Cys-109, Cys-112, Cys-122, and Cys-125 each contribute to the Zn(2+) site.

The protein belongs to the bacterial ribosomal protein bL32 family. Component of the mitochondrial ribosome large subunit (39S) which comprises a 16S rRNA and about 50 distinct proteins. Post-translationally, MRPL32 precursor is processed by the m-AAA protease (composed of AFG3L2 and SPG7), which cleaves the N-terminal transit peptide. Cleavage by the m-AAA protease takes place prior to assembly into the large subunit, an essential step for mitochondrial ribosome (mitoribosome) assembly. Proper processing by the m-AAA protease is dependent on the zinc-binding region within the tightly folded C-terminal domain of MRPL32: zinc-dependent folding halts degradation initiated from the N-terminus and triggers the release of mature MRPL32.

It localises to the mitochondrion. In terms of biological role, component of the mitochondrial large ribosomal subunit (mt-LSU). The mitochondrial ribosome (mitoribosome) is a large ribonucleoprotein complex responsible for the synthesis of proteins inside mitochondria. This is Large ribosomal subunit protein bL32m (Mrpl32) from Mus musculus (Mouse).